A 132-amino-acid polypeptide reads, in one-letter code: Small ribosomal subunit protein uS8 (132 aa).

The protein belongs to the universal ribosomal protein uS8 family. Part of the 30S ribosomal subunit. Contacts proteins S5 and S12.

One of the primary rRNA binding proteins, it binds directly to 16S rRNA central domain where it helps coordinate assembly of the platform of the 30S subunit. This chain is Small ribosomal subunit protein uS8, found in Staphylococcus saprophyticus subsp. saprophyticus (strain ATCC 15305 / DSM 20229 / NCIMB 8711 / NCTC 7292 / S-41).